The chain runs to 98 residues: NADH-ubiquinone oxidoreductase chain 4L (98 aa).

The next 3 helical transmembrane spans lie at 1–21, 29–49, and 58–78; these read MPII…GMLI, SLLC…LMAL, and IVPI…LALL.

Belongs to the complex I subunit 4L family. Core subunit of respiratory chain NADH dehydrogenase (Complex I) which is composed of 45 different subunits.

It is found in the mitochondrion inner membrane. The catalysed reaction is a ubiquinone + NADH + 5 H(+)(in) = a ubiquinol + NAD(+) + 4 H(+)(out). In terms of biological role, core subunit of the mitochondrial membrane respiratory chain NADH dehydrogenase (Complex I) which catalyzes electron transfer from NADH through the respiratory chain, using ubiquinone as an electron acceptor. Part of the enzyme membrane arm which is embedded in the lipid bilayer and involved in proton translocation. The sequence is that of NADH-ubiquinone oxidoreductase chain 4L (MT-ND4L) from Nasalis larvatus (Proboscis monkey).